Consider the following 467-residue polypeptide: MSVNDSTHIKTRFAPSPTGYLHVGGARTALFNYLFAKKFGGTFLLRIEDTDPERSKPEYSEQILISMKWLGLDWDEGPYHQSERMHIYQQYTQKLLEEGKAYRCFCTTEELEQMREQQRQQGLPTRYDGRCSRLTQEEIEERLNKGMPFAVRLKVPQDRGIIAWDDMVKGHIEINSSELDDFILVRSDGTPTYNFAVVIDDHTMGVTHVLRGEDHIPNTPKQILIYEALGWETPEFGHVPMILGKDKTKLSKRHGAVGVEAYRDEGFLPEALFNFLALLGASYDPDREVYTKQELIDLFDPKKIGLHPAVFDPDKLYYINREHMKMLPPEELLDRIRPFAEAKGFQIEPYHLRLIPLLVERMRTLKDFVELADYIFTDDFTVDEKAQELLAKDLPLGGLAEQLDATVWDADHIEAVLRQYAQDKGIKPRDYFPFIRAVISGKSVGPSLFHLMEAMPKDMVLRRLRKS.

A 'HIGH' region motif is present at residues 15–25 (PSPTGYLHVGG). The short motif at 249–253 (KLSKR) is the 'KMSKS' region element. Lys252 contributes to the ATP binding site.

Belongs to the class-I aminoacyl-tRNA synthetase family. Glutamate--tRNA ligase type 1 subfamily. Monomer.

The protein localises to the cytoplasm. It carries out the reaction tRNA(Glu) + L-glutamate + ATP = L-glutamyl-tRNA(Glu) + AMP + diphosphate. In terms of biological role, catalyzes the attachment of glutamate to tRNA(Glu) in a two-step reaction: glutamate is first activated by ATP to form Glu-AMP and then transferred to the acceptor end of tRNA(Glu). The chain is Glutamate--tRNA ligase from Coprothermobacter proteolyticus (strain ATCC 35245 / DSM 5265 / OCM 4 / BT).